A 98-amino-acid polypeptide reads, in one-letter code: UPF0235 protein MJ0618 (98 aa).

This sequence belongs to the UPF0235 family.

The sequence is that of UPF0235 protein MJ0618 from Methanocaldococcus jannaschii (strain ATCC 43067 / DSM 2661 / JAL-1 / JCM 10045 / NBRC 100440) (Methanococcus jannaschii).